A 102-amino-acid chain; its full sequence is UV-induced protein uvi31 (102 aa).

It belongs to the BolA/IbaG family.

Its subcellular location is the mitochondrion matrix. It is found in the cytoplasm. The protein resides in the nucleus. Functionally, acts as a mitochondrial iron-sulfur (Fe-S) cluster assembly factor that facilitates [4Fe-4S] cluster insertion into a subset of mitochondrial proteins such as lipoyl synthase (LS) and succinate dehydrogenase (SDH). Required during the last step of iron-sulfur protein assembly when the iron-sulfur cluster is inserted into the target protein. Probably acts together with the monothiol glutaredoxin grx5. Not required for [2Fe-2S] cluster insertion into mitochondrial proteins. May be involved in control of cell division, especially during the resumption from cell cycle arrest. In Schizosaccharomyces pombe (strain 972 / ATCC 24843) (Fission yeast), this protein is UV-induced protein uvi31.